A 228-amino-acid chain; its full sequence is DNA-3-methyladenine glycosylase 1 (228 aa).

The Proton acceptor role is filled by aspartate 170.

This sequence belongs to the alkylbase DNA glycosidase AlkA family.

It carries out the reaction Hydrolysis of alkylated DNA, releasing 3-methyladenine, 3-methylguanine, 7-methylguanine and 7-methyladenine.. Functionally, hydrolysis of the deoxyribose N-glycosidic bond to excise 3-methyladenine or 7-methyladenine from the damaged DNA polymer formed by alkylation lesions. Can release ethylated and propylated bases from DNA in addition to 3-methyladenine. This is DNA-3-methyladenine glycosylase 1 (mag1) from Schizosaccharomyces pombe (strain 972 / ATCC 24843) (Fission yeast).